A 911-amino-acid polypeptide reads, in one-letter code: MLEEPEAATRTAAAVDCKDRPGFPVKRLIQARLPFKRLNLVPKEKVEEDTSPKAAVESKVPDLQLSLGTFESQCHTGSHVGLSTKLVGGQGPIDSFLRATIKPVPSVVIIDLTENCSDIPDSPEGHSELSPDTAGVVTTVEGAAKQQEHSAAELCLLETPSDITCHMEEEPGSPGDPKRTGDCQAGSLQSCPELTPGSRTCPTKELSSWSKAGDLLFIEKVPVVVLEDILATKPSIASLPMMSLDRSVTSESEILESCPEDDSILSHSSTNSSSPTSSPEGPSTPPEHRGGRSSPSTPACRVAKNFVKGSTEKGRSKLHRDREQQREEKEKLREEIRRAKEEARKKKEEEKELKEKERREKREKDEKEKAEKQRLKEEKRKERQEALEAKLEEKRKKEEEKRLREEEKRLREEEKRIKAEKAEITRFFQKPKTPQAPKTLAGSCGKFAPFEIKEHMVLAPRCRAALDQDLCDQLDQLLQQQSVASTFLSDLKSRLPLRSGPTRVCGHDTDIMNRDVVIVESSKVDGVSERKKFGRMKLLQFSENHRPAYWGTWNKKTAIIRPRNPWAQDKDLLDYEVDSDDEWEEEEPGESLSHSEGDEDDDVGEDEDEDDGFFVPHGYLSEDEGVTEECADPENHKVHQKLKAKEWDELLAKGKRFRVLQPVHVGCVWASEAANCTSSDLKLLQQFTACLLDVASPDEPEPGASRREKRDQHILAQLLPLLHGNVNGSKVIIHEFQEQCRRGLLTLPSPTPHLQMPNLEDAVAVPSKARLKRLISENSAYEKRPNFRMCWYVHPEVLKSFGQECLPVPCQWTYITTMPSAPREDSGSASTEGPGQSTPMLLKRKPAATMCITQFMKKRRYDGQVGSGDMDGFQADTEEDEEDDTDCMIIDVPDVGSDVSEAPIPAPTLCK.

Positions 1–31 (MLEEPEAATRTAAAVDCKDRPGFPVKRLIQA) are binds PCNA. The tract at residues 166-200 (HMEEEPGSPGDPKRTGDCQAGSLQSCPELTPGSRT) is disordered. The binds CBX1 and CBX3 chromo shadow domains stretch occupies residues 176 to 327 (DPKRTGDCQA…LHRDREQQRE (152 aa)). The segment covering 186–200 (GSLQSCPELTPGSRT) has biased composition (polar residues). Phosphoserine is present on residues Ser-190 and Ser-208. Residues 217–230 (FIEKVPVVVLEDIL) carry the PxVxL motif motif. Disordered regions lie at residues 250–408 (SESE…EEEK) and 578–618 (DSDD…VPHG). Positions 265–281 (LSHSSTNSSSPTSSPEG) are enriched in low complexity. The residue at position 293 (Ser-293) is a Phosphoserine. Residues 310–408 (STEKGRSKLH…EEKRLREEEK (99 aa)) show a composition bias toward basic and acidic residues. Acidic residues-rich tracts occupy residues 578 to 589 (DSDDEWEEEEPG) and 597 to 612 (GDEDDDVGEDEDEDDG). Positions 621–657 (SEDEGVTEECADPENHKVHQKLKAKEWDELLAKGKRF) are necessary for homodimerization and competence for chromatin assembly. Positions 639–911 (HQKLKAKEWD…APIPAPTLCK (273 aa)) are binds to p60. Position 776 is a phosphoserine (Ser-776). 2 disordered regions span residues 819–843 (PSAPREDSGSASTEGPGQSTPMLLK) and 866–886 (GSGDMDGFQADTEEDEEDDTD). Residues 827–839 (GSASTEGPGQSTP) show a composition bias toward polar residues. At Thr-838 the chain carries Phosphothreonine. Residues 876-886 (DTEEDEEDDTD) are compositionally biased toward acidic residues.

It belongs to the CHAF1A family. As to quaternary structure, homodimer. Part of the CAF-1 complex that contains RBBP4, CHAF1B and CHAF1A. CHAF1A binds directly to CHAF1B. Only minor amounts of RBBP4 are complexed with CHAF1A and CHAF1B in G1 phase. Interacts with PCNA; the interaction is direct. Interacts (via the PxVxL motif) with CBX5; the interaction is direct. Interacts with MBD1. Interacts with histones H3.1, H3.2 and H3.1t.

The protein resides in the nucleus. Its function is as follows. Acts as a component of the histone chaperone complex chromatin assembly factor 1 (CAF-1), which assembles histone octamers onto DNA during replication and repair. CAF-1 performs the first step of the nucleosome assembly process, bringing newly synthesized histones H3 and H4 to replicating DNA; histones H2A/H2B can bind to this chromatin precursor subsequent to DNA replication to complete the histone octamer. It may play a role in heterochromatin maintenance in proliferating cells by bringing newly synthesized cbx proteins to heterochromatic DNA replication foci. This is Chromatin assembly factor 1 subunit A from Mus musculus (Mouse).